The following is a 558-amino-acid chain: MESQRSFFIIVFLIVSFILWKIWDDEHHINLLNIENNHSTLQPYSIQSHESNQNTPITHTNNPYSHIITIKTDVFLLKINTYSGNIEEAYLNNYQENLNSQKPLKLLHTSKENKYQAYIDIETLNEYFTNDLNQKNKKHYLYYSNTTNQCEYILKNNENKLQFDLTYQGPNNIIYTKRYLLNRNDYSIYITYIIDNQSTYPIHIKLYGNLIQSIHSDVIQSKHNDHCPLYTYQEAAYSTDTEKYQKYNLKDIKHTNLNIHSTNGWIALLQKYFIIALLPITPKDNTFYTTYLNNHDISIGFKSDFIHIPPGKKNELQSILWMGPKIQDNMKLVAPNLDLVIDYGWLWFISHPLFKLLQFIHTYTIDNWGISIILITVIIRLIMYPLTKAQYTSMAKIRMLQPKLISIQEEYKHDKYQYHQKTIELYKKEKVNPLGGCLPLLIQMPIFLALYYMLSESVELRHAKFAFWIKDLSDQDPYYILPIIMGITMFFIQKLSPTTITDPIQKKIMNIMLVIFTIFFLWFPSGLVLYYIISNIITIIQQQVIYHDLSKKGLHNKK.

The next 5 membrane-spanning stretches (helical) occupy residues 6–26, 359–379, 434–454, 480–500, and 513–533; these read SFFI…WDDE, FIHT…TVII, LGGC…YYML, ILPI…PTTI, and LVIF…YYII.

This sequence belongs to the OXA1/ALB3/YidC family. Type 1 subfamily. As to quaternary structure, interacts with the Sec translocase complex via SecD. Specifically interacts with transmembrane segments of nascent integral membrane proteins during membrane integration.

It localises to the cell inner membrane. In terms of biological role, required for the insertion and/or proper folding and/or complex formation of integral membrane proteins into the membrane. Involved in integration of membrane proteins that insert both dependently and independently of the Sec translocase complex, as well as at least some lipoproteins. Aids folding of multispanning membrane proteins. This is Membrane protein insertase YidC from Blochmanniella floridana.